The following is a 665-amino-acid chain: Protein-arginine deiminase type-2 (665 aa).

Residues D123, D125, D127, V129, E131, N154, D156, E158, D166, D169, K171, D177, D180, E354, D389, F408, L411, and E412 each coordinate Ca(2+). The active-site Nucleophile is C647.

Belongs to the protein arginine deiminase family. As to quaternary structure, homodimer. The cofactor is Ca(2+). As to expression, detected in keratinocytes in epidermis (at protein level).

Its subcellular location is the cytoplasm. It carries out the reaction L-arginyl-[protein] + H2O = L-citrullyl-[protein] + NH4(+). Its function is as follows. Catalyzes the deimination of arginine residues of proteins. In Homo sapiens (Human), this protein is Protein-arginine deiminase type-2 (PADI2).